The chain runs to 585 residues: Zinc finger protein 614 (585 aa).

The 72-residue stretch at Leu8–Pro79 folds into the KRAB domain. Residues His205–Cys227 form a C2H2-type 1; atypical zinc finger. The C2H2-type 2; degenerate zinc finger occupies Lys257–His281. 10 consecutive C2H2-type zinc fingers follow at residues Tyr287–His309, Tyr315–His337, Tyr343–His365, Tyr371–His393, Tyr399–His421, Tyr427–His449, Tyr455–His477, Phe483–His505, Tyr511–His533, and Tyr539–His561.

This sequence belongs to the krueppel C2H2-type zinc-finger protein family.

The protein localises to the nucleus. Functionally, may be involved in transcriptional regulation. This Homo sapiens (Human) protein is Zinc finger protein 614 (ZNF614).